Consider the following 225-residue polypeptide: Heptaprenylglyceryl phosphate synthase (225 aa).

K6 contributes to the sn-glycerol 1-phosphate binding site. D8 and T34 together coordinate Mg(2+). Sn-glycerol 1-phosphate is bound by residues 153-158, G183, and 203-204; these read YVEYSG and GN.

The protein belongs to the GGGP/HepGP synthase family. Group I subfamily. In terms of assembly, homodimer. Mg(2+) serves as cofactor.

The catalysed reaction is sn-glycerol 1-phosphate + all-trans-heptaprenyl diphosphate = 3-heptaprenyl-sn-glycero-1-phosphate + diphosphate. The protein operates within membrane lipid metabolism; glycerophospholipid metabolism. Its function is as follows. Prenyltransferase that catalyzes in vivo the transfer of the heptaprenyl moiety of heptaprenyl pyrophosphate (HepPP; 35 carbon atoms) to the C3 hydroxyl of sn-glycerol-1-phosphate (G1P), producing heptaprenylglyceryl phosphate (HepGP). This reaction is an ether-bond-formation step in the biosynthesis of archaea-type G1P-based membrane lipids found in Bacillales. To a much lesser extent, is also able to use geranylgeranyl diphosphate (GGPP; C20) as the prenyl donor. This chain is Heptaprenylglyceryl phosphate synthase, found in Listeria monocytogenes serovar 1/2a (strain ATCC BAA-679 / EGD-e).